A 628-amino-acid polypeptide reads, in one-letter code: uncharacterized protein (628 aa).

This sequence belongs to the ATP-dependent AMP-binding enzyme family.

This is an uncharacterized protein from Pseudomonas aeruginosa (strain ATCC 15692 / DSM 22644 / CIP 104116 / JCM 14847 / LMG 12228 / 1C / PRS 101 / PAO1).